Reading from the N-terminus, the 451-residue chain is UDP-N-acetylmuramoylalanine--D-glutamate ligase (451 aa).

Residue 119–125 coordinates ATP; it reads GSNGKTT.

The protein belongs to the MurCDEF family.

The protein resides in the cytoplasm. The enzyme catalyses UDP-N-acetyl-alpha-D-muramoyl-L-alanine + D-glutamate + ATP = UDP-N-acetyl-alpha-D-muramoyl-L-alanyl-D-glutamate + ADP + phosphate + H(+). Its pathway is cell wall biogenesis; peptidoglycan biosynthesis. In terms of biological role, cell wall formation. Catalyzes the addition of glutamate to the nucleotide precursor UDP-N-acetylmuramoyl-L-alanine (UMA). The chain is UDP-N-acetylmuramoylalanine--D-glutamate ligase from Geobacillus kaustophilus (strain HTA426).